The sequence spans 1397 residues: Protein RhsC (1397 aa).

28 tandem repeats follow at residues Asn330–Thr352, Gly353–Ala374, Gly375–Asp417, Gly418–Ala438, Gly439–Asp460, Gly461–Asp481, Gly482–Asp502, Gly503–Thr525, Gly526–Ser546, Gly547–Glu567, Gly568–Gln588, Gly589–Asp609, Gly610–Gly629, Gly630–Asn650, Gly651–Asp671, Gly672–Glu691, Gly692–Asn711, Gly712–Glu734, Gly735–His758, Gly808–Phe828, Gly829–Ser850, Leu851–Pro871, Arg872–Asn894, Leu895–Ala930, Arg931–Thr959, Asp960–Ala984, Glu985–Ser1019, and Gly1162–Gln1186. The interval Asn330–Gln1186 is 28 X approximate tandem repeats. Residues Gly1292–Ser1312 are disordered.

It belongs to the RHS family.

In terms of biological role, rhs elements have a nonessential function. They may play an important role in the natural ecology of the cell. The protein is Protein RhsC (rhsC) of Escherichia coli (strain K12).